Reading from the N-terminus, the 426-residue chain is 3-isopropylmalate dehydratase large subunit (426 aa).

Residues C307, C367, and C370 each contribute to the [4Fe-4S] cluster site.

The protein belongs to the aconitase/IPM isomerase family. LeuC type 2 subfamily. As to quaternary structure, heterodimer of LeuC and LeuD. [4Fe-4S] cluster is required as a cofactor.

It carries out the reaction (2R,3S)-3-isopropylmalate = (2S)-2-isopropylmalate. It functions in the pathway amino-acid biosynthesis; L-leucine biosynthesis; L-leucine from 3-methyl-2-oxobutanoate: step 2/4. Functionally, catalyzes the isomerization between 2-isopropylmalate and 3-isopropylmalate, via the formation of 2-isopropylmaleate. The sequence is that of 3-isopropylmalate dehydratase large subunit from Aliarcobacter butzleri (strain RM4018) (Arcobacter butzleri).